We begin with the raw amino-acid sequence, 743 residues long: 1,4-alpha-glucan branching enzyme GlgB (743 aa).

D416 serves as the catalytic Nucleophile. The active-site Proton donor is the E469.

It belongs to the glycosyl hydrolase 13 family. GlgB subfamily. Monomer.

The catalysed reaction is Transfers a segment of a (1-&gt;4)-alpha-D-glucan chain to a primary hydroxy group in a similar glucan chain.. The protein operates within glycan biosynthesis; glycogen biosynthesis. Its function is as follows. Catalyzes the formation of the alpha-1,6-glucosidic linkages in glycogen by scission of a 1,4-alpha-linked oligosaccharide from growing alpha-1,4-glucan chains and the subsequent attachment of the oligosaccharide to the alpha-1,6 position. This chain is 1,4-alpha-glucan branching enzyme GlgB, found in Shewanella baltica (strain OS155 / ATCC BAA-1091).